Here is a 214-residue protein sequence, read N- to C-terminus: Putative F-box protein At5g15670 (214 aa).

The F-box domain occupies 22–68 (RNKFDEIPHDLVIEILGRLPAKSVARFLTVSKLWATSIRSLDFIKSY).

The polypeptide is Putative F-box protein At5g15670 (Arabidopsis thaliana (Mouse-ear cress)).